Here is a 213-residue protein sequence, read N- to C-terminus: Large ribosomal subunit protein uL3 (213 aa).

The protein belongs to the universal ribosomal protein uL3 family. As to quaternary structure, part of the 50S ribosomal subunit. Forms a cluster with proteins L14 and L19.

One of the primary rRNA binding proteins, it binds directly near the 3'-end of the 23S rRNA, where it nucleates assembly of the 50S subunit. This is Large ribosomal subunit protein uL3 from Bifidobacterium longum subsp. infantis (strain ATCC 15697 / DSM 20088 / JCM 1222 / NCTC 11817 / S12).